The following is a 351-amino-acid chain: Pentatricopeptide repeat-containing protein At2g40240, mitochondrial (351 aa).

The N-terminal 27 residues, 1–27 (MSLLRRRFVKQSVNCITFLQILAERSF), are a transit peptide targeting the mitochondrion. PPR repeat units follow at residues 106–140 (RKNAYDILISRLCKLGRIDDALIVIGDMSNGRLGL), 141–175 (TPSTYHPILCSLTRKYKIEEAWRVVESMRSKSVSM), 176–210 (DVTAYNYFLTSHCYDGELESASEVMRKIEEDGNSP), 211–245 (DSRSYDALVLGACRAGKVEAAMAILRRMEEDGVTV), 246–280 (LYSTHAHVITGLVEGGYYALGLEFVMAYAGKDLRL), and 281–315 (DSESFGFLAGKLVKRKRYEEAMIVVKEMVMRGLRM).

This sequence belongs to the PPR family. P subfamily.

It is found in the mitochondrion. In Arabidopsis thaliana (Mouse-ear cress), this protein is Pentatricopeptide repeat-containing protein At2g40240, mitochondrial.